A 2694-amino-acid chain; its full sequence is Neurobeachin-like protein 1 (2694 aa).

Disordered regions lie at residues 1289–1314 (VLMKDNDKNMSTEDTKKNSDEKTDEE), 1330–1350 (SLEDRHSLDSNTPLFPEDSSV), and 1381–1411 (CEMSDSGSQVPDSLPSTPSPVESTKSFSVHS). Residues 1290–1314 (LMKDNDKNMSTEDTKKNSDEKTDEE) show a composition bias toward basic and acidic residues. Over residues 1383–1409 (MSDSGSQVPDSLPSTPSPVESTKSFSV) the composition is skewed to polar residues. In terms of domain architecture, BEACH-type PH spans 1883 to 1980 (DQKEKLVLME…VRNKIYSRLL (98 aa)). The BEACH domain occupies 1992 to 2284 (RSPQELFKAS…QLLKEPHPPR (293 aa)). WD repeat units lie at residues 2439–2478 (RHMDIVTCLATDYCGIHLISGSRDTTCMIWQITQQGGVPV) and 2490–2531 (GHTN…RTLR).

This sequence belongs to the WD repeat neurobeachin family. Highly expressed in brain, kidney, prostate and testis. Weakly expressed in ovary, small intestine, colon and peripheral blood leukocytes. May be correlative to several tumors, such as ovary serous adenocarcinoma and metastasis mammary gland carcinoma breast.

The sequence is that of Neurobeachin-like protein 1 (NBEAL1) from Homo sapiens (Human).